Reading from the N-terminus, the 769-residue chain is Polymeric immunoglobulin receptor (769 aa).

An N-terminal signal peptide occupies residues 1–18; that stretch reads MRLSLFALLVTVFSGVST. Topologically, residues 19–643 are extracellular; the sequence is QSPIFGPQDV…SAGGQSGSSK (625 aa). The Ig-like V-type 1; required for binding to polymeric IgA and IgM domain occupies 21 to 126; it reads PIFGPQDVSS…RGLFFDVSLE (106 aa). Residues C40 and C110 are joined by a disulfide bond. N90, N135, and N206 each carry an N-linked (GlcNAc...) asparagine glycan. 4 consecutive Ig-like V-type domains span residues 135–237, 240–341, 353–457, and 463–563; these read NDTH…DLQV, PEPE…VQAW, NSRS…LQVA, and PDLE…IYVA. Disulfide bonds link C152–C220, C257–C324, and C370–C440. Residue N471 is glycosylated (N-linked (GlcNAc...) asparagine). A disulfide bridge links C484 with C546. 2 disordered regions span residues 569-604 and 619-640; these read RGSP…NKAN and AGDQ…GQSG. Over residues 595–604 the composition is skewed to basic and acidic residues; that stretch reads SVREDENKAN. A helical transmembrane segment spans residues 644-666; that stretch reads VLFSTLVPLGLVLAVGAVAVWVA. Over 667 to 769 the chain is Cytoplasmic; that stretch reads RVRHRKNVDR…AQVHDGPQEA (103 aa). 4 positions are modified to phosphoserine: S678, S687, S694, and S740. The segment at 719–741 is disordered; sequence EIETTTECTTEPEESKKAKRSSK. A compositionally biased stretch (basic and acidic residues) spans 731–741; it reads EESKKAKRSSK.

Interacts (mainly via CDR1-like domain) with dimeric IgA. Interacts (mainly via CDR2-like domain) with pentameric IgM. As to quaternary structure, either free or part of the secretory IgA (sIgA) complex that consists of two, four or five IgA monomers, and two additional non-Ig polypeptides, namely the JCHAIN and the secretory component (the proteolytic product of PIGR). Free secretory component interacts with bacterial antigens toxA of C.difficile and eae of E.coli. N-glycosylated. N-glycosylation is required for anchoring IgA molecules to mucus, but is not necessary for Ig binding.

It localises to the cell membrane. It is found in the secreted. In terms of biological role, mediates selective transcytosis of polymeric IgA and IgM across mucosal epithelial cells. Binds polymeric IgA and IgM at the basolateral surface of epithelial cells. The complex is then transported across the cell to be secreted at the apical surface. During this process, a cleavage occurs that separates the extracellular (known as the secretory component) from the transmembrane segment. Through its N-linked glycans ensures anchoring of secretory IgA (sIgA) molecules to mucus lining the epithelial surface to neutralize extracellular pathogens. On its own (free form) may act as a non-specific microbial scavenger to prevent pathogen interaction with epithelial cells. The chain is Polymeric immunoglobulin receptor (Pigr) from Rattus norvegicus (Rat).